The following is a 210-amino-acid chain: Guanylate kinase (210 aa).

Residues 23 to 203 (GRVVVLSGPS…ACAELVSLLV (181 aa)) form the Guanylate kinase-like domain. 30–37 (GPSAVGKS) serves as a coordination point for ATP.

This sequence belongs to the guanylate kinase family.

The protein resides in the cytoplasm. The enzyme catalyses GMP + ATP = GDP + ADP. Essential for recycling GMP and indirectly, cGMP. The chain is Guanylate kinase (gmk) from Mycobacterium leprae (strain TN).